We begin with the raw amino-acid sequence, 658 residues long: MKLYCLSGHPTLPCNILKFKSSTIMLDCGLDMTSTLSFLPLPLVHSTRLSKLPGWVTKDGNNQFEKELKECSGRVFVDSVPEFCLPETELIDLSTVDVILISNYHCMMALPYITERTGFTGTVYATEPTVQIGRLLMEELVNFIERVPKAQSATVWKHKDVQRLLPAPLKDAVEVFTWKKCYSMQEVNAALSKIQLVGYSQKIELFGVVQVTPLSSGYALGSSNWVIQSHYEKVSYVSGSSLLTTHPQPMDQTSLKNSDVLILTGLTQIPTANPDGMVGEFCSNLAMTIRSGGNVLVPCYPSGVIYDLLECLYQYIDSAGLSNVPFYFISPVANSSLEFSQIFAEWLCHNKQNKVYLPEPPFPHAELIQSNKLKHYPNIHGDFSNDFKQPCVVFTGHPTLRFGDVVHFMELWGKSSLNTVIFTEPDFSYLDALAPYQPLAMKCVYCPIDTRLNFIQVTKLLKEVQPLHVVCPEQYTQPPATQSHRSDLMIDCQPPPMSYHRAEVLTLPFKRRYEKIEIMPELAQSLVPFEMKPGVSLATVSAVLHSKDNKHVLQPPPKPVAPPGSKKRKRPAEESPETPPFKPLLSGSIPVEQFVQTLEKNGFSDVKIEDTAKGHIVHLQEAETLIQFEEDSTHIICEHDERLRVRLRDLVLKFLQKF.

Residues 547-586 are disordered; it reads KDNKHVLQPPPKPVAPPGSKKRKRPAEESPETPPFKPLLS. The short motif at 566–570 is the Nuclear localization signal element; the sequence is KKRKR.

The protein belongs to the metallo-beta-lactamase superfamily. RNA-metabolizing metallo-beta-lactamase-like family. INTS9 subfamily. As to quaternary structure, component of the Integrator complex, composed of core subunits INTS1, INTS2, INTS3, INTS4, INTS5, INTS6, INTS7, INTS8, INTS9/RC74, INTS10, INTS11/CPSF3L, INTS12, INTS13, INTS14 and INTS15. The core complex associates with protein phosphatase 2A subunits PPP2CA and PPP2R1A, to form the Integrator-PP2A (INTAC) complex. INTS9 is part of the RNA endonuclease subcomplex, composed of INTS4, INTS9, INTS11 and inositol hexakisphosphate (InsP6).

The protein localises to the nucleus. The protein resides in the cytoplasm. Functionally, component of the integrator complex, a multiprotein complex that terminates RNA polymerase II (Pol II) transcription in the promoter-proximal region of genes. The integrator complex provides a quality checkpoint during transcription elongation by driving premature transcription termination of transcripts that are unfavorably configured for transcriptional elongation: the complex terminates transcription by (1) catalyzing dephosphorylation of the C-terminal domain (CTD) of Pol II subunit POLR2A/RPB1 and SUPT5H/SPT5, (2) degrading the exiting nascent RNA transcript via endonuclease activity and (3) promoting the release of Pol II from bound DNA. The integrator complex is also involved in terminating the synthesis of non-coding Pol II transcripts, such as enhancer RNAs (eRNAs), small nuclear RNAs (snRNAs), telomerase RNAs and long non-coding RNAs (lncRNAs). The chain is Integrator complex subunit 9 (ints9) from Xenopus laevis (African clawed frog).